The following is a 444-amino-acid chain: MREILHIQGGQCGNQIGSKFWEVVCDEHGIDPTGRYAGTSDLQLERVNVYYNEASCGRFVPRAVLMDLEPGTMDSVRTGPYGQIFRPDNFVFGQSGAGNNWAKGHYTEGAELIDSVLDVVRKEAENCDCLQGFQVCHSLGGGTGSGMGTLLISKIREEYPDRMMLTFSVFPSPKVSDTVVEPYNATLSVHQLVENADECMVLDNEALYDICFRTLKLTTPSFGDLNHLISATMSGVTCCLRFPGQLNSDLRKLAVNLIPFPRLHFFMVGFAPLTSRGSQQYRALTVPELTQQMWDAKNMMCAADPRHGRYLTASAMFRGKMSTKEVDEQMINVQNKNSSYFVEWIPNNVKSSVCDIPPRGLSMASTFVGNSTSIQEMFRRVSEQFTAMFRRKAFLHWYTGEGMDEMEFTEAESNMNDLVSEYQQYQDATADEAEYEEEEDAIQE.

GTP is bound by residues Q11, E69, S138, G142, T143, G144, N204, and N226. Residue E69 participates in Mg(2+) binding.

This sequence belongs to the tubulin family. As to quaternary structure, dimer of alpha and beta chains. A typical microtubule is a hollow water-filled tube with an outer diameter of 25 nm and an inner diameter of 15 nM. Alpha-beta heterodimers associate head-to-tail to form protofilaments running lengthwise along the microtubule wall with the beta-tubulin subunit facing the microtubule plus end conferring a structural polarity. Microtubules usually have 13 protofilaments but different protofilament numbers can be found in some organisms and specialized cells. The cofactor is Mg(2+). In terms of tissue distribution, expressed in roots, leaf sheaths, anthers, and suspension cultured cells.

It is found in the cytoplasm. The protein resides in the cytoskeleton. Its function is as follows. Tubulin is the major constituent of microtubules, a cylinder consisting of laterally associated linear protofilaments composed of alpha- and beta-tubulin heterodimers. Microtubules grow by the addition of GTP-tubulin dimers to the microtubule end, where a stabilizing cap forms. Below the cap, tubulin dimers are in GDP-bound state, owing to GTPase activity of alpha-tubulin. The protein is Tubulin beta-6 chain (TUBB6) of Oryza sativa subsp. japonica (Rice).